We begin with the raw amino-acid sequence, 177 residues long: Large ribosomal subunit protein uL6 (177 aa).

Belongs to the universal ribosomal protein uL6 family. As to quaternary structure, part of the 50S ribosomal subunit.

Its function is as follows. This protein binds to the 23S rRNA, and is important in its secondary structure. It is located near the subunit interface in the base of the L7/L12 stalk, and near the tRNA binding site of the peptidyltransferase center. In Pectobacterium atrosepticum (strain SCRI 1043 / ATCC BAA-672) (Erwinia carotovora subsp. atroseptica), this protein is Large ribosomal subunit protein uL6.